We begin with the raw amino-acid sequence, 215 residues long: Small ribosomal subunit protein uS3 (215 aa).

In terms of domain architecture, KH type-2 spans 38 to 107; that stretch reads IRDYIKKTYH…KFQLNIEEVK (70 aa).

This sequence belongs to the universal ribosomal protein uS3 family. Part of the 30S ribosomal subunit. Forms a tight complex with proteins S10 and S14.

Binds the lower part of the 30S subunit head. Binds mRNA in the 70S ribosome, positioning it for translation. This Kosmotoga olearia (strain ATCC BAA-1733 / DSM 21960 / TBF 19.5.1) protein is Small ribosomal subunit protein uS3.